A 242-amino-acid polypeptide reads, in one-letter code: ATP-dependent dethiobiotin synthetase BioD (242 aa).

12–17 (EVGKTV) is a binding site for ATP. Thr-16 provides a ligand contact to Mg(2+). Lys-37 is a catalytic residue. A substrate-binding site is contributed by Ser-41. ATP-binding positions include Asp-51 and 112 to 115 (EGAG). Residues Asp-51 and Glu-112 each coordinate Mg(2+).

Belongs to the dethiobiotin synthetase family. As to quaternary structure, homodimer. The cofactor is Mg(2+).

The protein localises to the cytoplasm. The enzyme catalyses (7R,8S)-7,8-diammoniononanoate + CO2 + ATP = (4R,5S)-dethiobiotin + ADP + phosphate + 3 H(+). The protein operates within cofactor biosynthesis; biotin biosynthesis; biotin from 7,8-diaminononanoate: step 1/2. Functionally, catalyzes a mechanistically unusual reaction, the ATP-dependent insertion of CO2 between the N7 and N8 nitrogen atoms of 7,8-diaminopelargonic acid (DAPA, also called 7,8-diammoniononanoate) to form a ureido ring. In Bacillus anthracis (strain A0248), this protein is ATP-dependent dethiobiotin synthetase BioD.